We begin with the raw amino-acid sequence, 117 residues long: Large ribosomal subunit protein bL20 (117 aa).

The protein belongs to the bacterial ribosomal protein bL20 family.

Its function is as follows. Binds directly to 23S ribosomal RNA and is necessary for the in vitro assembly process of the 50S ribosomal subunit. It is not involved in the protein synthesizing functions of that subunit. The protein is Large ribosomal subunit protein bL20 of Campylobacter lari (strain RM2100 / D67 / ATCC BAA-1060).